Reading from the N-terminus, the 442-residue chain is ATP-dependent protease ATPase subunit HslU (442 aa).

ATP contacts are provided by residues Ile18, 60–65 (GVGKTE), Asp255, Glu320, and Arg392.

The protein belongs to the ClpX chaperone family. HslU subfamily. As to quaternary structure, a double ring-shaped homohexamer of HslV is capped on each side by a ring-shaped HslU homohexamer. The assembly of the HslU/HslV complex is dependent on binding of ATP.

The protein localises to the cytoplasm. In terms of biological role, ATPase subunit of a proteasome-like degradation complex; this subunit has chaperone activity. The binding of ATP and its subsequent hydrolysis by HslU are essential for unfolding of protein substrates subsequently hydrolyzed by HslV. HslU recognizes the N-terminal part of its protein substrates and unfolds these before they are guided to HslV for hydrolysis. This Shewanella sp. (strain W3-18-1) protein is ATP-dependent protease ATPase subunit HslU.